We begin with the raw amino-acid sequence, 434 residues long: ATP-dependent protease ATPase subunit HslU (434 aa).

ATP-binding positions include Val18, Gly60–Glu65, Asp247, Glu312, and Arg384.

This sequence belongs to the ClpX chaperone family. HslU subfamily. In terms of assembly, a double ring-shaped homohexamer of HslV is capped on each side by a ring-shaped HslU homohexamer. The assembly of the HslU/HslV complex is dependent on binding of ATP.

The protein resides in the cytoplasm. In terms of biological role, ATPase subunit of a proteasome-like degradation complex; this subunit has chaperone activity. The binding of ATP and its subsequent hydrolysis by HslU are essential for unfolding of protein substrates subsequently hydrolyzed by HslV. HslU recognizes the N-terminal part of its protein substrates and unfolds these before they are guided to HslV for hydrolysis. The polypeptide is ATP-dependent protease ATPase subunit HslU (Rhodopseudomonas palustris (strain BisB18)).